Reading from the N-terminus, the 120-residue chain is UPF0145 protein Mboo_1021 (120 aa).

This sequence belongs to the UPF0145 family.

This Methanoregula boonei (strain DSM 21154 / JCM 14090 / 6A8) protein is UPF0145 protein Mboo_1021.